The chain runs to 976 residues: Ephrin type-B receptor 4b (976 aa).

Positions 1-23 are cleaved as a signal peptide; sequence MDRVCWIMALSWFWMVSTGLVSA. The Extracellular portion of the chain corresponds to 24-541; sequence EEEVLMNTKL…ESPSRLMLTG (518 aa). Residues 25 to 204 enclose the Eph LBD domain; that stretch reads EEVLMNTKLE…FFKKCPAVSR (180 aa). 2 cysteine pairs are disulfide-bonded: cysteine 69–cysteine 186 and cysteine 103–cysteine 113. Fibronectin type-III domains are found at residues 326-434 and 438-529; these read PPSA…TSRD and PVSG…TLPD. A helical transmembrane segment spans residues 542 to 562; the sequence is VLVAIGLLILIAVVIVAVFCF. The Cytoplasmic segment spans residues 563-976; sequence RRSTRRRDPD…LRIHGGSLRY (414 aa). The Protein kinase domain maps to 613–897; sequence VKIEEVIGAG…IPDGPSHPLL (285 aa). Residues 619-627 and lysine 645 contribute to the ATP site; that span reads IGAGEFGEV. Aspartate 738 functions as the Proton acceptor in the catalytic mechanism. In terms of domain architecture, SAM spans 906 to 970; sequence SHCSSVADWL…LSSVQTLRIH (65 aa).

Belongs to the protein kinase superfamily. Tyr protein kinase family. Ephrin receptor subfamily.

It localises to the cell membrane. It catalyses the reaction L-tyrosyl-[protein] + ATP = O-phospho-L-tyrosyl-[protein] + ADP + H(+). Its function is as follows. Receptor tyrosine kinase which binds promiscuously transmembrane ephrin-B family ligands residing on adjacent cells, leading to contact-dependent bidirectional signaling into neighboring cells. The signaling pathway downstream of the receptor is referred to as forward signaling while the signaling pathway downstream of the ephrin ligand is referred to as reverse signaling. Together with its cognate ligand/functional ligand EFNB2 is involved in the regulation of cell adhesion and cell migration, and plays a central role in heart morphogenesis, angiogenesis and blood vessel remodeling and permeability. EPHB4-mediated forward signaling controls cellular repulsion and segregation from EFNB2-expressing cells. Involved in somitogenesis. This is Ephrin type-B receptor 4b from Danio rerio (Zebrafish).